The sequence spans 382 residues: Regulatory protein RapC (382 aa).

5 TPR repeats span residues 102–138, 149–182, 183–216, 223–256, and 263–296; these read YYVN…VADH, AEAY…NVRI, IQCH…AQAE, GRAY…FESS, and PQAY…AKET.

It belongs to the Rap family. Homodimer. Interacts specifically with the C-terminal DNA-binding domain of ComA. Interacts with CSF.

The protein resides in the cytoplasm. With respect to regulation, inhibited by the competence and sporulation stimulating factor (CSF), encoded by phrC, which prevents RapC-ComA interaction. Involved in the regulation of genetic competence development. Inhibits the activity of ComA, a transcriptional factor that regulates the development of genetic competence. Acts by binding to ComA, independently of its phosphorylation state, leading to the inhibition of ComA DNA-binding activity. Does not dephosphorylate phospho-ComA and does not affect the phosphorylation level of the ComP-ComA system. The protein is Regulatory protein RapC (rapC) of Bacillus subtilis (strain 168).